Here is a 314-residue protein sequence, read N- to C-terminus: uncharacterized protein (314 aa).

The N-terminal stretch at 1–20 (MKKRAGIWAALLLAAVMLAG) is a signal peptide. The N-palmitoyl cysteine moiety is linked to residue Cys21. Residue Cys21 is the site of S-diacylglycerol cysteine attachment. A Fe/B12 periplasmic-binding domain is found at 59 to 311 (KIVSLMPSNT…ELAESIYPDT (253 aa)).

The protein belongs to the bacterial solute-binding protein 8 family. The complex is composed of two ATP-binding proteins (YvrA), two transmembrane proteins (YvrB) and a solute-binding protein (YvrC).

Its subcellular location is the cell membrane. Probably part of an ABC transporter complex. This is an uncharacterized protein from Bacillus subtilis (strain 168).